A 407-amino-acid polypeptide reads, in one-letter code: Odorant receptor 67a (407 aa).

At 1–40 (MDNVAEMPEEKYVEVDDFLRLAVKFYNTLGIDPYETGRKR) the chain is on the cytoplasmic side. Residues 41-61 (TIWFQIYFALNMFNMVFSFYA) form a helical membrane-spanning segment. The Extracellular segment spans residues 62-79 (EVATLVDRLRDNENFLES). The helical transmembrane segment at 80–100 (CILLSYVSFVVMGLSKIGAVM) threads the bilayer. The Cytoplasmic portion of the chain corresponds to 101-144 (KKKPKMTALVRQLETCFPSPSAKVQEEYAVKSWLKRCHIYTKGF). The chain crosses the membrane as a helical span at residues 145–165 (GGLFMIMYFAHALIPLFIYFI). The Extracellular segment spans residues 166–208 (QRVLLHYPDAKQIMPFYQLEPWEFRDSWLFYPSYFHQSSAGYT). The chain crosses the membrane as a helical span at residues 209 to 229 (ATCGSIAGDLMIFAVVLQVIM). The Cytoplasmic segment spans residues 230–278 (HYERLAKVLREFKIQAHNAPNGAKEDIRKLQSLVANHIDILRLTDLMNE). A helical transmembrane segment spans residues 279 to 300 (VFGIPLLLNFIASALLVCLVGV). Topologically, residues 301–314 (QLTIALSPEYFCKQ) are extracellular. A helical membrane pass occupies residues 315-331 (MLFLISVLLEVYLLCSF). The Cytoplasmic segment spans residues 332–378 (SQRLIDASENVGHAAYDMDWLGSDKRFKKILIFISMRSQKPVCLKAT). A helical transmembrane segment spans residues 379-401 (VVLDLSMPTMSIFLGMSYKFFCA). At 402–407 (VRTMYQ) the chain is on the extracellular side.

This sequence belongs to the insect chemoreceptor superfamily. Heteromeric odorant receptor channel (TC 1.A.69) family. Or49a subfamily. As to quaternary structure, interacts with Orco. Complexes exist early in the endomembrane system in olfactory sensory neurons (OSNs), coupling these complexes to the conserved ciliary trafficking pathway. As to expression, expressed in olfactory sensory neurons in the antenna.

It localises to the cell membrane. In terms of biological role, odorant receptor which mediates acceptance or avoidance behavior, depending on its substrates. The odorant receptor repertoire encodes a large collection of odor stimuli that vary widely in identity, intensity, and duration. Forms a complex with Orco to form odorant-sensing units, providing sensitive and prolonged odorant signaling and calcium permeability. Involved in the behavioral responses to benzaldehyde and acetophenone. The chain is Odorant receptor 67a (Or67a) from Drosophila melanogaster (Fruit fly).